We begin with the raw amino-acid sequence, 618 residues long: Serine/threonine-protein kinase pkn1 (618 aa).

One can recognise a Protein kinase domain in the interval tyrosine 15–phenylalanine 381. Residues leucine 21 to aspartate 29 and lysine 44 each bind ATP.

This sequence belongs to the protein kinase superfamily. Ser/Thr protein kinase family. Post-translationally, autophosphorylated on serine and threonine residues.

It carries out the reaction L-seryl-[protein] + ATP = O-phospho-L-seryl-[protein] + ADP + H(+). It catalyses the reaction L-threonyl-[protein] + ATP = O-phospho-L-threonyl-[protein] + ADP + H(+). Together with the serine/threonine kinase PknD, may play a role in the specific interactions with host proteins during intracellular growth. This Chlamydia caviae (strain ATCC VR-813 / DSM 19441 / 03DC25 / GPIC) (Chlamydophila caviae) protein is Serine/threonine-protein kinase pkn1 (pkn1).